Reading from the N-terminus, the 92-residue chain is Small ribosomal subunit protein uS19 (92 aa).

This sequence belongs to the universal ribosomal protein uS19 family.

Its function is as follows. Protein S19 forms a complex with S13 that binds strongly to the 16S ribosomal RNA. In Rickettsia typhi (strain ATCC VR-144 / Wilmington), this protein is Small ribosomal subunit protein uS19.